A 286-amino-acid polypeptide reads, in one-letter code: Acyl-CoA-binding domain-containing protein 6 (286 aa).

Positions 1–24 (MASPGVLEESSSGEACSGGCPEQW) are disordered. Over residues 8 to 22 (EESSSGEACSGGCPE) the composition is skewed to low complexity. An ACB domain is found at 32–117 (LQGQFEQAAK…VKKLDPDWSP (86 aa)). An acyl-CoA-binding positions include 59-63 (YARYK), Lys85, and Tyr104. ANK repeat units lie at residues 182 to 211 (EGRC…HINM) and 215 to 244 (EGQT…DPSL).

The protein resides in the cytoplasm. It localises to the nucleus. Its function is as follows. Binds long-chain acyl-coenzyme A molecules with a strong preference for unsaturated C18:1-CoA. Does not bind fatty acids. Plays a role in protein N-myristoylation. This Xenopus tropicalis (Western clawed frog) protein is Acyl-CoA-binding domain-containing protein 6 (acbd6).